The following is a 288-amino-acid chain: MRLFEGAFQPWKLASTNLMQQCLLLNKKSQFHTTCILQGLKKQKANQRRKQNLKRREELRKQNLDTLADPIIGHSSEWIARLLKPYEILVERKKPNFPIRSIKFPASMETINLIVEKFEKIRASATEETKDFIKLNEVNEFPSSDTSLESNQDGFERLHPLAERLERMSQLSDLRKESIHRIFNIENSNSKTLRLNNKQLAVESFARNERDTGSPEVQAAVYTSRILALSDHCKNHKKDQTGKRMLRYYVHQRQRMLKYLRKVNFDRYVHCIKNLGLTDELVLREVTQ.

The N-terminal 50 residues, 1–50, are a transit peptide targeting the mitochondrion; that stretch reads MRLFEGAFQPWKLASTNLMQQCLLLNKKSQFHTTCILQGLKKQKANQRRK.

This sequence belongs to the universal ribosomal protein uS15 family. Component of the mitochondrial small ribosomal subunit (mt-SSU). Mature yeast 74S mitochondrial ribosomes consist of a small (37S) and a large (54S) subunit. The 37S small subunit contains a 15S ribosomal RNA (15S mt-rRNA) and at least 32 different proteins. The 54S large subunit contains a 21S rRNA (21S mt-rRNA) and at least 45 different proteins.

The protein resides in the mitochondrion. Functionally, component of the mitochondrial ribosome (mitoribosome), a dedicated translation machinery responsible for the synthesis of mitochondrial genome-encoded proteins, including at least some of the essential transmembrane subunits of the mitochondrial respiratory chain. The mitoribosomes are attached to the mitochondrial inner membrane and translation products are cotranslationally integrated into the membrane. This chain is Small ribosomal subunit protein uS15m (mrps28), found in Schizosaccharomyces pombe (strain 972 / ATCC 24843) (Fission yeast).